Reading from the N-terminus, the 339-residue chain is DNA-directed RNA polymerase subunit alpha (339 aa).

The alpha N-terminal domain (alpha-NTD) stretch occupies residues 1–235 (MVLQKNWQSL…DQLQLFINFD (235 aa)). The tract at residues 251–339 (FNRNLLRKVD…DLAKRLDEPF (89 aa)) is alpha C-terminal domain (alpha-CTD).

This sequence belongs to the RNA polymerase alpha chain family. Homodimer. The RNAP catalytic core consists of 2 alpha, 1 beta, 1 beta' and 1 omega subunit. When a sigma factor is associated with the core the holoenzyme is formed, which can initiate transcription.

The catalysed reaction is RNA(n) + a ribonucleoside 5'-triphosphate = RNA(n+1) + diphosphate. In terms of biological role, DNA-dependent RNA polymerase catalyzes the transcription of DNA into RNA using the four ribonucleoside triphosphates as substrates. The chain is DNA-directed RNA polymerase subunit alpha from Gluconacetobacter diazotrophicus (strain ATCC 49037 / DSM 5601 / CCUG 37298 / CIP 103539 / LMG 7603 / PAl5).